A 51-amino-acid polypeptide reads, in one-letter code: Large ribosomal subunit protein bL33 (51 aa).

It belongs to the bacterial ribosomal protein bL33 family.

The protein is Large ribosomal subunit protein bL33 of Francisella tularensis subsp. tularensis (strain FSC 198).